Reading from the N-terminus, the 652-residue chain is uncharacterized protein (652 aa).

Residues 1-13 are compositionally biased toward basic and acidic residues; it reads MSVTESKAKTERK. The interval 1–21 is disordered; the sequence is MSVTESKAKTERKSSRKPAKT.

The protein belongs to the ParB family.

This is an uncharacterized protein from Escherichia coli (strain K12).